Here is a 451-residue protein sequence, read N- to C-terminus: Phosphoglucosamine mutase (451 aa).

The active-site Phosphoserine intermediate is S104. Mg(2+) is bound by residues S104, D249, D251, and D253. Residue S104 is modified to Phosphoserine.

The protein belongs to the phosphohexose mutase family. Mg(2+) serves as cofactor. Activated by phosphorylation.

It carries out the reaction alpha-D-glucosamine 1-phosphate = D-glucosamine 6-phosphate. Its function is as follows. Catalyzes the conversion of glucosamine-6-phosphate to glucosamine-1-phosphate. The sequence is that of Phosphoglucosamine mutase from Psychrobacter sp. (strain PRwf-1).